A 118-amino-acid polypeptide reads, in one-letter code: Large ribosomal subunit protein uL24 (118 aa).

It belongs to the universal ribosomal protein uL24 family. As to quaternary structure, part of the 50S ribosomal subunit.

Its function is as follows. One of two assembly initiator proteins, it binds directly to the 5'-end of the 23S rRNA, where it nucleates assembly of the 50S subunit. Functionally, one of the proteins that surrounds the polypeptide exit tunnel on the outside of the subunit. This is Large ribosomal subunit protein uL24 from Prochlorococcus marinus (strain MIT 9515).